We begin with the raw amino-acid sequence, 617 residues long: Protein kinase STUNTED (617 aa).

Positions 162-187 (SSELSEGFSDKDLAKTTGQEKRKISG) are disordered. The segment covering 169 to 184 (FSDKDLAKTTGQEKRK) has biased composition (basic and acidic residues). The region spanning 277-555 (FSLENLIGKG…RGEDDVSKWV (279 aa)) is the Protein kinase domain. ATP-binding positions include 283–291 (IGKGGCNEV) and lysine 305. Phosphotyrosine is present on tyrosine 350. Aspartate 399 functions as the Proton acceptor in the catalytic mechanism. Serine 403 is subject to Phosphoserine. Phosphothreonine is present on threonine 439. Tyrosine 447 carries the phosphotyrosine modification. Residues 590 to 617 (DSVSNSSLERSNNSLFSSSSSSSQELQS) are disordered. The segment covering 591 to 617 (SVSNSSLERSNNSLFSSSSSSSQELQS) has biased composition (low complexity).

Belongs to the protein kinase superfamily. Ser/Thr protein kinase family. In terms of tissue distribution, expressed ubiquitously, mostly in roots, to a lower extent in leaves, floral buds and stems, and, at low levels, in flowers and siliques.

The protein resides in the cytoplasm. Functionally, promotes cell proliferation in the gibberellic acid (GA) signaling pathway, acting downstream of RGA, and possibly through a negative regulation of two cyclin-dependent kinase inhibitors SIM and SMR1. In Arabidopsis thaliana (Mouse-ear cress), this protein is Protein kinase STUNTED.